Here is a 103-residue protein sequence, read N- to C-terminus: uncharacterized protein (103 aa).

A run of 3 helical transmembrane segments spans residues 1-21 (MPGVIFWTIFIIQFMIWVFLS), 29-49 (IAFIWGTMPFLALYLKYTGYF), and 69-89 (VVEWSYLVVQTTVPSWIGLLF).

The protein resides in the cell membrane. This is an uncharacterized protein from Methanocaldococcus jannaschii (strain ATCC 43067 / DSM 2661 / JAL-1 / JCM 10045 / NBRC 100440) (Methanococcus jannaschii).